A 223-amino-acid chain; its full sequence is ATP phosphoribosyltransferase (223 aa).

The protein belongs to the ATP phosphoribosyltransferase family. Short subfamily. As to quaternary structure, heteromultimer composed of HisG and HisZ subunits.

It is found in the cytoplasm. It carries out the reaction 1-(5-phospho-beta-D-ribosyl)-ATP + diphosphate = 5-phospho-alpha-D-ribose 1-diphosphate + ATP. The protein operates within amino-acid biosynthesis; L-histidine biosynthesis; L-histidine from 5-phospho-alpha-D-ribose 1-diphosphate: step 1/9. Catalyzes the condensation of ATP and 5-phosphoribose 1-diphosphate to form N'-(5'-phosphoribosyl)-ATP (PR-ATP). Has a crucial role in the pathway because the rate of histidine biosynthesis seems to be controlled primarily by regulation of HisG enzymatic activity. This chain is ATP phosphoribosyltransferase, found in Bordetella pertussis (strain Tohama I / ATCC BAA-589 / NCTC 13251).